Here is a 292-residue protein sequence, read N- to C-terminus: Acetyl-coenzyme A carboxylase carboxyl transferase subunit beta (292 aa).

The region spanning Met36 to Glu292 is the CoA carboxyltransferase N-terminal domain. Cys40, Cys43, Cys59, and Cys62 together coordinate Zn(2+). The segment at Cys40–Cys62 adopts a C4-type zinc-finger fold.

Belongs to the AccD/PCCB family. In terms of assembly, acetyl-CoA carboxylase is a heterohexamer composed of biotin carboxyl carrier protein (AccB), biotin carboxylase (AccC) and two subunits each of ACCase subunit alpha (AccA) and ACCase subunit beta (AccD). The cofactor is Zn(2+).

The protein resides in the cytoplasm. The enzyme catalyses N(6)-carboxybiotinyl-L-lysyl-[protein] + acetyl-CoA = N(6)-biotinyl-L-lysyl-[protein] + malonyl-CoA. Its pathway is lipid metabolism; malonyl-CoA biosynthesis; malonyl-CoA from acetyl-CoA: step 1/1. Component of the acetyl coenzyme A carboxylase (ACC) complex. Biotin carboxylase (BC) catalyzes the carboxylation of biotin on its carrier protein (BCCP) and then the CO(2) group is transferred by the transcarboxylase to acetyl-CoA to form malonyl-CoA. The protein is Acetyl-coenzyme A carboxylase carboxyl transferase subunit beta of Clostridium perfringens (strain ATCC 13124 / DSM 756 / JCM 1290 / NCIMB 6125 / NCTC 8237 / Type A).